The following is a 299-amino-acid chain: Diaminopimelate epimerase (299 aa).

The substrate site is built by Asn-13, Gln-46, and Asn-66. Residue Cys-75 is the Proton donor of the active site. Substrate is bound by residues 76–77 (GN), Asn-166, Asn-199, and 217–218 (ER). The Proton acceptor role is filled by Cys-226. 227 to 228 (GT) lines the substrate pocket.

This sequence belongs to the diaminopimelate epimerase family. In terms of assembly, homodimer.

It is found in the cytoplasm. It carries out the reaction (2S,6S)-2,6-diaminopimelate = meso-2,6-diaminopimelate. It participates in amino-acid biosynthesis; L-lysine biosynthesis via DAP pathway; DL-2,6-diaminopimelate from LL-2,6-diaminopimelate: step 1/1. Functionally, catalyzes the stereoinversion of LL-2,6-diaminopimelate (L,L-DAP) to meso-diaminopimelate (meso-DAP), a precursor of L-lysine and an essential component of the bacterial peptidoglycan. The polypeptide is Diaminopimelate epimerase (Paraburkholderia phytofirmans (strain DSM 17436 / LMG 22146 / PsJN) (Burkholderia phytofirmans)).